Here is a 293-residue protein sequence, read N- to C-terminus: Xyloglucan endotransglucosylase/hydrolase protein 31 (293 aa).

The first 20 residues, 1–20 (MALSLIFLALLVLCPSSGHS), serve as a signal peptide directing secretion. Residues 29–230 (YPSSRVPTSP…YRYQPFVAKY (202 aa)) form the GH16 domain. Residue Glu114 is the Nucleophile of the active site. Glu118 acts as the Proton donor in catalysis. Xyloglucan contacts are provided by residues Glu118, 131–133 (QTN), 141–148 (DRNVIGRE), and 209–210 (DW). 2 disulfides stabilise this stretch: Cys238–Cys246 and Cys280–Cys293. Arg285 is a xyloglucan binding site.

This sequence belongs to the glycosyl hydrolase 16 family. XTH group 3 subfamily. In terms of assembly, interacts with XTH17. The formation of an XTH17-XTH31 dimer may be required for XET activity. Contains at least one intrachain disulfide bond essential for its enzymatic activity. In terms of tissue distribution, predominantly expressed in root. Weakly expressed in influorescence stems. Expressed in root tips and elongation zones, stems, young leaves, flowers and siliques. Expressed in root, hypocotyl, and etiolated whole seedlings.

It is found in the secreted. It localises to the cell wall. Its subcellular location is the extracellular space. The protein localises to the apoplast. The protein resides in the cell membrane. The catalysed reaction is breaks a beta-(1-&gt;4) bond in the backbone of a xyloglucan and transfers the xyloglucanyl segment on to O-4 of the non-reducing terminal glucose residue of an acceptor, which can be a xyloglucan or an oligosaccharide of xyloglucan.. It catalyses the reaction xyloglucan + H2O = xyloglucan oligosaccharides.. Catalyzes xyloglucan endohydrolysis (XEH) and/or endotransglycosylation (XET). Cleaves and religates xyloglucan polymers, an essential constituent of the primary cell wall, and thereby participates in cell wall construction of growing tissues. Involved in the accumulation of hemicelluloses. Has a high XEH activity and only a slight XET activity in vitro, but the main in planta activity seems to be XET, thus controlling aluminum sensitivity. Acceptor preferences are XXXGol = XXFGol &gt; XXLGol &gt; XLLGol = XLFGol. The chain is Xyloglucan endotransglucosylase/hydrolase protein 31 from Arabidopsis thaliana (Mouse-ear cress).